The primary structure comprises 257 residues: 3-deoxy-manno-octulosonate cytidylyltransferase (257 aa).

Belongs to the KdsB family.

It localises to the cytoplasm. It carries out the reaction 3-deoxy-alpha-D-manno-oct-2-ulosonate + CTP = CMP-3-deoxy-beta-D-manno-octulosonate + diphosphate. The protein operates within nucleotide-sugar biosynthesis; CMP-3-deoxy-D-manno-octulosonate biosynthesis; CMP-3-deoxy-D-manno-octulosonate from 3-deoxy-D-manno-octulosonate and CTP: step 1/1. Its pathway is bacterial outer membrane biogenesis; lipopolysaccharide biosynthesis. In terms of biological role, activates KDO (a required 8-carbon sugar) for incorporation into bacterial lipopolysaccharide in Gram-negative bacteria. The protein is 3-deoxy-manno-octulosonate cytidylyltransferase of Stenotrophomonas maltophilia (strain R551-3).